The following is a 256-amino-acid chain: tRNA pseudouridine synthase A (256 aa).

D52 acts as the Nucleophile in catalysis. Y110 provides a ligand contact to substrate.

It belongs to the tRNA pseudouridine synthase TruA family. In terms of assembly, homodimer.

It carries out the reaction uridine(38/39/40) in tRNA = pseudouridine(38/39/40) in tRNA. Its function is as follows. Formation of pseudouridine at positions 38, 39 and 40 in the anticodon stem and loop of transfer RNAs. The chain is tRNA pseudouridine synthase A from Stenotrophomonas maltophilia (strain R551-3).